Here is a 126-residue protein sequence, read N- to C-terminus: Large ribosomal subunit protein bL17 (126 aa).

The protein belongs to the bacterial ribosomal protein bL17 family. In terms of assembly, part of the 50S ribosomal subunit. Contacts protein L32.

This Lawsonia intracellularis (strain PHE/MN1-00) protein is Large ribosomal subunit protein bL17.